A 708-amino-acid polypeptide reads, in one-letter code: C-Jun-amino-terminal kinase-interacting protein 1 (708 aa).

Residues 1-26 (MAERESGLSGGAASPPAASPFLGLHI) form a disordered region. The segment covering 11–24 (GAASPPAASPFLGL) has biased composition (low complexity). S14, S28, and S39 each carry phosphoserine. Positions 69–368 (PPRAGLLSAG…PPRASLSSDT (300 aa)) are disordered. Residues 71-87 (RAGLLSAGSSGSAGSRL) show a composition bias toward low complexity. The residue at position 103 (T103) is a Phosphothreonine; by MAPK8, MAPK9 and MAPK10. Over residues 105–116 (GAEDDEEDDDEL) the composition is skewed to acidic residues. Positions 126-282 (SKAESGQEPA…EATEEIYLTP (157 aa)) are JNK-binding domain (JBD). Residue S149 is modified to Phosphoserine. Residues 154–173 (RPKRPTTLNLFPQVPRSQDT) form a minimal inhibitory domain (MID) region. The span at 159–179 (TTLNLFPQVPRSQDTLNNNSL) shows a compositional bias: polar residues. S178, S184, S190, S192, and S193 each carry phosphoserine. The span at 191–201 (RSSSPLKTGEQ) shows a compositional bias: polar residues. T202 bears the Phosphothreonine; by MAPK8, MAPK9 and MAPK10 mark. At S211 the chain carries Phosphoserine. Positions 220 to 232 (PVPTQDRGTSTDS) are enriched in polar residues. Residues 264-274 (IHYQADVRLEA) show a composition bias toward basic and acidic residues. Positions 280–468 (LTPVQRPPDP…NVFMSGRSRS (189 aa)) are interaction with MAP3K7. Polar residues predominate over residues 292–308 (PTSTFLPPTESRMSVSS). 9 positions are modified to phosphoserine: S308, S325, S327, S337, S352, S363, S366, S404, and S406. Short sequence motifs (D-box) lie at residues 350–357 (RGSLGEPP) and 361–369 (RASLSSDTS). T408 is subject to Phosphothreonine. The disordered stretch occupies residues 426–448 (EEYEEAPQPRPPTCLSEDSTPDE). Phosphoserine occurs at positions 441 and 444. T445 bears the Phosphothreonine mark. Residues S466, S468, S469, and S470 each carry the phosphoserine modification. The segment at 468–657 (SSSAESFGLF…PKNNKYFGFI (190 aa)) is interaction with VRK2. Residues 485–546 (EHEQTHRAIF…PAYYAIEVTK (62 aa)) form the SH3 domain. Residues 558-697 (SDWIDQFRVK…FQQFYKQFVE (140 aa)) enclose the PID domain.

It belongs to the JIP scaffold family. As to quaternary structure, forms homo- or heterooligomeric complexes. Binds specific components of the JNK signaling pathway namely MAPK8/JNK1, MAPK9/JNK2, MAPK10/JNK3, MAP2K7/MKK7, MAP3K11/MLK3 and DLK1. Also binds the proline-rich domain-containing splice variant of apolipoprotein E receptor 2 (ApoER2). Interacts, via the PID domain, with ARHGEF28. Binds the cytoplasmic tails of LRP1 and LRP2 (Megalin). Binds the TPR motif-containing C-terminal of kinesin light chain, KLC1. Pre-assembled MAPK8IP1 scaffolding complexes are then transported as a cargo of kinesin, to the required subcellular location. Interacts with the cytoplasmic domain of APP. Interacts with DCLK2, VRK2 and MAP3K7/TAK1. Found in a complex with SH3RF1, RAC1, MAP3K11/MLK3, MAP2K7/MKK7 and MAPK8/JNK1. Found in a complex with SH3RF1, RAC2, MAP3K7/TAK1, MAP2K7/MKK7, MAPK8/JNK1 and MAPK9/JNK2. Interacts with SH3RF2. Post-translationally, phosphorylated by MAPK8, MAPK9 and MAPK10. Phosphorylation on Thr-103 is also necessary for the dissociation and activation of MAP3K12. Phosphorylated by VRK2. Hyperphosphorylated during mitosis following activation of stress-activated and MAP kinases. In terms of processing, ubiquitinated. Two preliminary events are required to prime for ubiquitination; phosphorylation and an increased in intracellular calcium concentration. Then, the calcium influx initiates ubiquitination and degradation by the ubiquitin-proteasome pathway. Highly expressed in brain and pancreatic beta-cells. Weaker expression found in kidney.

Its subcellular location is the cytoplasm. It localises to the perinuclear region. The protein localises to the nucleus. It is found in the endoplasmic reticulum membrane. The protein resides in the mitochondrion membrane. Functionally, the JNK-interacting protein (JIP) group of scaffold proteins selectively mediates JNK signaling by aggregating specific components of the MAPK cascade to form a functional JNK signaling module. Required for JNK activation in response to excitotoxic stress. Cytoplasmic MAPK8IP1 causes inhibition of JNK-regulated activity by retaining JNK in the cytoplasm and thus inhibiting the JNK phosphorylation of c-Jun. May also participate in ApoER2-specific reelin signaling. Directly, or indirectly, regulates GLUT2 gene expression and beta-cell function. Appears to have a role in cell signaling in mature and developing nerve terminals. May function as a regulator of vesicle transport, through interactions with the JNK-signaling components and motor proteins. Functions as an anti-apoptotic protein and whose level seems to influence the beta-cell death or survival response. Acts as a scaffold protein that coordinates with SH3RF1 in organizing different components of the JNK pathway, including RAC1 or RAC2, MAP3K11/MLK3 or MAP3K7/TAK1, MAP2K7/MKK7, MAPK8/JNK1 and/or MAPK9/JNK2 into a functional multiprotein complex to ensure the effective activation of the JNK signaling pathway. Regulates the activation of MAPK8/JNK1 and differentiation of CD8(+) T-cells. The chain is C-Jun-amino-terminal kinase-interacting protein 1 (Mapk8ip1) from Rattus norvegicus (Rat).